Consider the following 131-residue polypeptide: Cytochrome c-552 (131 aa).

Cysteine 11, cysteine 14, histidine 15, and methionine 69 together coordinate heme c.

Post-translationally, binds 1 heme c group covalently per subunit.

Its function is as follows. This monoheme basic protein appears to function as an electron donor to cytochrome oxidase in T.thermophilus. The chain is Cytochrome c-552 (cycA) from Thermus thermophilus.